Reading from the N-terminus, the 164-residue chain is NADH-quinone oxidoreductase subunit B (164 aa).

[4Fe-4S] cluster is bound by residues C38, C39, C104, and C133.

This sequence belongs to the complex I 20 kDa subunit family. As to quaternary structure, NDH-1 is composed of 14 different subunits. Subunits NuoB, C, D, E, F, and G constitute the peripheral sector of the complex. Requires [4Fe-4S] cluster as cofactor.

It localises to the cell inner membrane. It catalyses the reaction a quinone + NADH + 5 H(+)(in) = a quinol + NAD(+) + 4 H(+)(out). Functionally, NDH-1 shuttles electrons from NADH, via FMN and iron-sulfur (Fe-S) centers, to quinones in the respiratory chain. The immediate electron acceptor for the enzyme in this species is believed to be ubiquinone. Couples the redox reaction to proton translocation (for every two electrons transferred, four hydrogen ions are translocated across the cytoplasmic membrane), and thus conserves the redox energy in a proton gradient. The chain is NADH-quinone oxidoreductase subunit B from Protochlamydia amoebophila (strain UWE25).